The following is a 278-amino-acid chain: Elongation factor Ts (278 aa).

The tract at residues 82 to 85 is involved in Mg(2+) ion dislocation from EF-Tu; sequence TEPV.

This sequence belongs to the EF-Ts family.

The protein localises to the cytoplasm. Associates with the EF-Tu.GDP complex and induces the exchange of GDP to GTP. It remains bound to the aminoacyl-tRNA.EF-Tu.GTP complex up to the GTP hydrolysis stage on the ribosome. The sequence is that of Elongation factor Ts from Cytophaga hutchinsonii (strain ATCC 33406 / DSM 1761 / CIP 103989 / NBRC 15051 / NCIMB 9469 / D465).